The primary structure comprises 938 residues: Isoleucine--tRNA ligase (938 aa).

Residues 58-68 carry the 'HIGH' region motif; the sequence is PYANGNIHIGH. Position 563 (Glu563) interacts with L-isoleucyl-5'-AMP. The short motif at 604 to 608 is the 'KMSKS' region element; that stretch reads KMSKS. Lys607 contacts ATP. Positions 903, 906, 921, and 924 each coordinate Zn(2+).

The protein belongs to the class-I aminoacyl-tRNA synthetase family. IleS type 1 subfamily. As to quaternary structure, monomer. Zn(2+) serves as cofactor.

It localises to the cytoplasm. It carries out the reaction tRNA(Ile) + L-isoleucine + ATP = L-isoleucyl-tRNA(Ile) + AMP + diphosphate. Its function is as follows. Catalyzes the attachment of isoleucine to tRNA(Ile). As IleRS can inadvertently accommodate and process structurally similar amino acids such as valine, to avoid such errors it has two additional distinct tRNA(Ile)-dependent editing activities. One activity is designated as 'pretransfer' editing and involves the hydrolysis of activated Val-AMP. The other activity is designated 'posttransfer' editing and involves deacylation of mischarged Val-tRNA(Ile). This chain is Isoleucine--tRNA ligase, found in Buchnera aphidicola subsp. Schizaphis graminum (strain Sg).